Consider the following 1153-residue polypeptide: ATP-dependent helicase/deoxyribonuclease subunit B (1153 aa).

8–15 (GRAGSGKS) lines the ATP pocket. Residues Cys786, Cys1104, Cys1107, and Cys1113 each contribute to the [4Fe-4S] cluster site.

This sequence belongs to the helicase family. AddB/RexB type 1 subfamily. As to quaternary structure, heterodimer of AddA and AddB. The cofactor is Mg(2+). It depends on [4Fe-4S] cluster as a cofactor.

The heterodimer acts as both an ATP-dependent DNA helicase and an ATP-dependent, dual-direction single-stranded exonuclease. Recognizes the chi site generating a DNA molecule suitable for the initiation of homologous recombination. The AddB subunit has 5' -&gt; 3' nuclease activity but not helicase activity. The sequence is that of ATP-dependent helicase/deoxyribonuclease subunit B from Clostridium acetobutylicum (strain ATCC 824 / DSM 792 / JCM 1419 / IAM 19013 / LMG 5710 / NBRC 13948 / NRRL B-527 / VKM B-1787 / 2291 / W).